The sequence spans 348 residues: Lipoyl synthase, mitochondrial (348 aa).

[4Fe-4S] cluster is bound by residues cysteine 105, cysteine 110, cysteine 116, cysteine 136, cysteine 140, and cysteine 143. The 221-residue stretch at 121 to 341 folds into the Radical SAM core domain; that stretch reads ETGTATATIM…RTXXLVSYVL (221 aa).

The protein belongs to the radical SAM superfamily. Lipoyl synthase family. [4Fe-4S] cluster serves as cofactor.

It localises to the mitochondrion. The catalysed reaction is [[Fe-S] cluster scaffold protein carrying a second [4Fe-4S](2+) cluster] + N(6)-octanoyl-L-lysyl-[protein] + 2 oxidized [2Fe-2S]-[ferredoxin] + 2 S-adenosyl-L-methionine + 4 H(+) = [[Fe-S] cluster scaffold protein] + N(6)-[(R)-dihydrolipoyl]-L-lysyl-[protein] + 4 Fe(3+) + 2 hydrogen sulfide + 2 5'-deoxyadenosine + 2 L-methionine + 2 reduced [2Fe-2S]-[ferredoxin]. It functions in the pathway protein modification; protein lipoylation via endogenous pathway; protein N(6)-(lipoyl)lysine from octanoyl-[acyl-carrier-protein]: step 2/2. Its function is as follows. Catalyzes the radical-mediated insertion of two sulfur atoms into the C-6 and C-8 positions of the octanoyl moiety bound to the lipoyl domains of lipoate-dependent enzymes, thereby converting the octanoylated domains into lipoylated derivatives. In Ricinus communis (Castor bean), this protein is Lipoyl synthase, mitochondrial (LIP1).